The chain runs to 332 residues: uncharacterized protein (332 aa).

The tract at residues 159-256 (PLEISGRGGN…PRPHPWGPGP (98 aa)) is disordered. Residues 201–231 (RPPSPRPPSPRPPHPRPPSPRPPHPRPPSPR) show a composition bias toward pro residues.

The protein resides in the virion. This is an uncharacterized protein from Acanthamoeba polyphaga (Amoeba).